The primary structure comprises 460 residues: Cysteine--tRNA ligase (460 aa).

A Zn(2+)-binding site is contributed by cysteine 27. Residues 29–39 (PTVYDLIHVGN) carry the 'HIGH' region motif. Positions 207, 232, and 236 each coordinate Zn(2+). The 'KMSKS' region signature appears at 264–268 (KMSKS). Residue lysine 267 coordinates ATP.

It belongs to the class-I aminoacyl-tRNA synthetase family. As to quaternary structure, monomer. It depends on Zn(2+) as a cofactor.

The protein localises to the cytoplasm. The catalysed reaction is tRNA(Cys) + L-cysteine + ATP = L-cysteinyl-tRNA(Cys) + AMP + diphosphate. The sequence is that of Cysteine--tRNA ligase from Thermotoga petrophila (strain ATCC BAA-488 / DSM 13995 / JCM 10881 / RKU-1).